The chain runs to 271 residues: uncharacterized protein (271 aa).

It belongs to the HAD-like hydrolase superfamily.

This is an uncharacterized protein from Staphylococcus aureus.